A 928-amino-acid chain; its full sequence is Echinoderm microtubule-associated protein-like 4 (928 aa).

The segment at 1 to 189 is microtubule-binding; the sequence is MDGFAGSLDD…IPSDVENYDD (189 aa). The stretch at 14–63 forms a coiled coil; it reads AASTSDVQDRLSALELRVQQQEDEITVLKAALADVLRRLAISEDQVATVR. The segment at 107 to 131 is disordered; sequence SAAKSVKRSSTIEKSHNSWDASEES. The segment covering 116-131 has biased composition (basic and acidic residues); the sequence is STIEKSHNSWDASEES. WD repeat units lie at residues 199–237, 241–288, 296–336, 343–378, 385–424, 442–480, 485–521, 524–563, 567–604, 610–646, 653–692, 702–760, and 767–806; these read LKLEWVFGYRGRDCRANVYLLPTGEIVYFIASVVVLFNY, TQRH…VWDS, VIGL…VWDW, AEIKTTNEVVLTVEFHPTDACTIVTCGKSHIFFWTW, RKQGIFGKYEKPKFVQCLAFLANGDVLAGDSGGVMLIWSK, QISRQIKAHDGSVFTLCQMRNGMLLTGGGKDRKVIMWDH, EREIEVPDQYGTIRAVAEGKGDQFLIGTSRNFILRGT, DGFQVEVQGHTDELWGLATHPFKDLLLTCAQDKQVCLWNS, SLEWTRVLDEPGHCADFHPTGTVVAIGTHSGRWFVLDA, VSIHTDGNEQLSVMRYSVDGALLAVGSHDNFIYLYNV, YSRYGKCTGHSSYITHLDWSPDNQYIMSNSGDYEILYWDI, RSDC…LFQY, and APSHKYSAHSSHVTNVSFTHKDSHLISTGGKDMSIMQWRL. The tract at residues 821-928 is disordered; it reads SSSAVNSPVV…ENQDDSSPLS (108 aa). Polar residues predominate over residues 836 to 845; the sequence is QPNTPTNLPQ. Residues 867–876 show a composition bias toward acidic residues; the sequence is DALEQPEELN. Residues 877-898 show a composition bias toward polar residues; sequence EVQSEKCSSQPEGANGQEPSNE.

Belongs to the WD repeat EMAP family. In terms of assembly, homotrimer; self-association is mediated by the N-terminal coiled coil.

The protein resides in the cytoplasm. The protein localises to the cytoskeleton. Its subcellular location is the spindle. It is found in the microtubule organizing center. It localises to the midbody. Functionally, essential for the formation and stability of microtubules (MTs). Required for the organization of the mitotic spindle and for the proper attachment of kinetochores to MTs. Promotes the recruitment of NUDC to the mitotic spindle for mitotic progression. The protein is Echinoderm microtubule-associated protein-like 4 (eml4) of Xenopus tropicalis (Western clawed frog).